A 203-amino-acid polypeptide reads, in one-letter code: Secreted phosphoprotein 24 (203 aa).

Residues 1–23 (MELATMKTLVMLVLGMHYWCASG) form the signal peptide. Intrachain disulfides connect Cys86-Cys96 and Cys109-Cys127. Ser90 carries the phosphoserine modification. Ser137, Ser138, and Ser174 each carry phosphoserine.

Belongs to the SPP2 family. In terms of processing, multiply phosphorylated at serine residues. Phosphorylation sites are present in the extracellular medium.

It localises to the secreted. Its function is as follows. Could coordinate an aspect of bone turnover. This chain is Secreted phosphoprotein 24 (Spp2), found in Rattus norvegicus (Rat).